Consider the following 446-residue polypeptide: Exodeoxyribonuclease 7 large subunit (446 aa).

It belongs to the XseA family. As to quaternary structure, heterooligomer composed of large and small subunits.

The protein localises to the cytoplasm. It carries out the reaction Exonucleolytic cleavage in either 5'- to 3'- or 3'- to 5'-direction to yield nucleoside 5'-phosphates.. Bidirectionally degrades single-stranded DNA into large acid-insoluble oligonucleotides, which are then degraded further into small acid-soluble oligonucleotides. The sequence is that of Exodeoxyribonuclease 7 large subunit from Staphylococcus carnosus (strain TM300).